A 177-amino-acid polypeptide reads, in one-letter code: Large ribosomal subunit protein uL6 (177 aa).

Belongs to the universal ribosomal protein uL6 family. As to quaternary structure, part of the 50S ribosomal subunit.

Its function is as follows. This protein binds to the 23S rRNA, and is important in its secondary structure. It is located near the subunit interface in the base of the L7/L12 stalk, and near the tRNA binding site of the peptidyltransferase center. In Aliivibrio fischeri (strain MJ11) (Vibrio fischeri), this protein is Large ribosomal subunit protein uL6.